A 375-amino-acid chain; its full sequence is tRNA-specific 2-thiouridylase MnmA (375 aa).

ATP-binding positions include 12-19 (GMSGGVDS) and methionine 38. Residues 98–100 (NPD) form an interaction with target base in tRNA region. Cysteine 103 functions as the Nucleophile in the catalytic mechanism. An intrachain disulfide couples cysteine 103 to cysteine 200. Residue glycine 127 coordinates ATP. Residues 150–152 (KDQ) form an interaction with tRNA region. Catalysis depends on cysteine 200, which acts as the Cysteine persulfide intermediate. The segment at 312-313 (RY) is interaction with tRNA.

The protein belongs to the MnmA/TRMU family.

Its subcellular location is the cytoplasm. The enzyme catalyses S-sulfanyl-L-cysteinyl-[protein] + uridine(34) in tRNA + AH2 + ATP = 2-thiouridine(34) in tRNA + L-cysteinyl-[protein] + A + AMP + diphosphate + H(+). Its function is as follows. Catalyzes the 2-thiolation of uridine at the wobble position (U34) of tRNA, leading to the formation of s(2)U34. This is tRNA-specific 2-thiouridylase MnmA from Lactobacillus johnsonii (strain CNCM I-12250 / La1 / NCC 533).